We begin with the raw amino-acid sequence, 66 residues long: Beta-toxin Chui4 (66 aa).

In terms of domain architecture, LCN-type CS-alpha/beta spans 1–66 (KEGYLVELGT…VWPLKNKTCK (66 aa)). Intrachain disulfides connect cysteine 12/cysteine 65, cysteine 16/cysteine 41, cysteine 25/cysteine 46, and cysteine 29/cysteine 48.

It belongs to the long (4 C-C) scorpion toxin superfamily. Sodium channel inhibitor family. Beta subfamily. As to expression, expressed by the venom gland.

The protein resides in the secreted. Its function is as follows. Beta toxins bind voltage-independently at site-4 of sodium channels (Nav) and shift the voltage of activation toward more negative potentials thereby affecting sodium channel activation and promoting spontaneous and repetitive firing. Acts on human sodium channel Nav1.6/SCN8A. Also able to weakly shift the activation curves of human Nav1.2/SCN2A and Nav1.4/SCN4A. The sequence is that of Beta-toxin Chui4 from Centruroides huichol (Scorpion).